A 385-amino-acid chain; its full sequence is 8-amino-7-oxononanoate synthase (385 aa).

Residue Arg21 participates in substrate binding. 108-109 is a pyridoxal 5'-phosphate binding site; that stretch reads GY. Substrate is bound at residue His133. 3 residues coordinate pyridoxal 5'-phosphate: Ser179, His207, and Thr233. Lys236 carries the post-translational modification N6-(pyridoxal phosphate)lysine. Thr350 is a substrate binding site.

The protein belongs to the class-II pyridoxal-phosphate-dependent aminotransferase family. BioF subfamily. In terms of assembly, homodimer. It depends on pyridoxal 5'-phosphate as a cofactor.

The enzyme catalyses 6-carboxyhexanoyl-[ACP] + L-alanine + H(+) = (8S)-8-amino-7-oxononanoate + holo-[ACP] + CO2. Its pathway is cofactor biosynthesis; biotin biosynthesis. Catalyzes the decarboxylative condensation of pimeloyl-[acyl-carrier protein] and L-alanine to produce 8-amino-7-oxononanoate (AON), [acyl-carrier protein], and carbon dioxide. The chain is 8-amino-7-oxononanoate synthase from Pectobacterium atrosepticum (strain SCRI 1043 / ATCC BAA-672) (Erwinia carotovora subsp. atroseptica).